A 290-amino-acid polypeptide reads, in one-letter code: MSQGGGLNILSIQSSVAYGHVGNSAAVFPLQRLGIEVWAVNTVHFSNHTGYGEWRGPVLAAGDVSEVLRGIGERGVLGSCGAVLSGYMGDVSLGEVILGAVGRVRGANPQALFCCDPVMGDEGRGFFVRPGIPRFMRERAVPAADVVTPNQFELEYLAGVEVRTLGGALAAAEKVLGLGPGTVLVTSLRRRDAGEEGRIEMLAATREGAWLVGTPLLPLEVNGAGDATAALFLGHLLLGRGLEEALSLTASSVYAVLEKTLRRGAREIQLVAAQESLVAPPVRFPVRRVA.

Residue S14 coordinates substrate. ATP-binding residues include D116 and E153. A substrate-binding site is contributed by D226.

This sequence belongs to the pyridoxine kinase family. PdxY subfamily. As to quaternary structure, homodimer. It depends on Mg(2+) as a cofactor.

It catalyses the reaction pyridoxal + ATP = pyridoxal 5'-phosphate + ADP + H(+). Its pathway is cofactor metabolism; pyridoxal 5'-phosphate salvage; pyridoxal 5'-phosphate from pyridoxal: step 1/1. In terms of biological role, pyridoxal kinase involved in the salvage pathway of pyridoxal 5'-phosphate (PLP). Catalyzes the phosphorylation of pyridoxal to PLP. The sequence is that of Pyridoxal kinase PdxY from Rubrobacter xylanophilus (strain DSM 9941 / JCM 11954 / NBRC 16129 / PRD-1).